Consider the following 80-residue polypeptide: MKLCLTFLLVLMILASVTGEKSSKHTLSRAARVKNRGPSFCKADEKPCKYHADCCNCCLGGICKPSTSWIGCSTNVFLTR.

Residues 1 to 19 (MKLCLTFLLVLMILASVTG) form the signal peptide. Residues 20–35 (EKSSKHTLSRAARVKN) constitute a propeptide that is removed on maturation. 4-hydroxyproline; partial occurs at positions 38 and 47. 4 cysteine pairs are disulfide-bonded: Cys41-Cys55, Cys48-Cys58, Cys54-Cys63, and Cys57-Cys72. Residue Pro65 is modified to 4-hydroxyproline. Leu78 is modified (D-leucine). Residue Arg80 is a propeptide, removed by a carboxypeptidase.

Post-translationally, the natural D-Leu form of the peptide is more potent than the synthetic L-Leu form. As to expression, expressed by the venom duct.

It localises to the secreted. In terms of biological role, iota-conotoxins bind to voltage-gated sodium channels (Nav) and act as agonists by shifting the voltage-dependence of activation to more hyperpolarized levels. Causes circular motion, convulsions, copious urination, rigid paralysis and death upon intracranial injection into mice. Causes unbalanced swimming, swimming in diagonal and vertical motion and death, when injected intraperitoneally into goldfish. L-Leu and D-Leu forms are active on both nerve and muscle. The chain is Iota-conotoxin-like r11c from Conus radiatus (Rayed cone).